The primary structure comprises 138 residues: Transcriptional regulator MraZ (138 aa).

SpoVT-AbrB domains are found at residues glutamate 3–glutamate 45 and alanine 74–arginine 117.

This sequence belongs to the MraZ family. As to quaternary structure, forms oligomers.

Its subcellular location is the cytoplasm. The protein resides in the nucleoid. The protein is Transcriptional regulator MraZ of Symbiobacterium thermophilum (strain DSM 24528 / JCM 14929 / IAM 14863 / T).